The chain runs to 474 residues: PTS system sucrose-specific EIIBC component (474 aa).

A PTS EIIB type-1 domain is found at 4-87 (SQIAQQVIDK…SKLLGIGDMT (84 aa)). The active-site Phosphocysteine intermediate; for EIIB activity is the cysteine 26. The region spanning 107–474 (KGLADIFVPI…LGKRAQLKAE (368 aa)) is the PTS EIIC type-1 domain. A run of 10 helical transmembrane segments spans residues 109–129 (LADI…LMGI), 158–178 (FINT…GFSA), 182–202 (FGGN…PALS), 229–249 (VGYQ…ATLE), 264–284 (ITPL…IGPI), 303–323 (LGFV…ITGM), 345–365 (FIFP…LGAA), 376–396 (IAVP…MFGV), 403–423 (PFIS…LFNV), and 444–464 (LAMY…LTVI).

The protein resides in the cell inner membrane. The enzyme catalyses N(pros)-phospho-L-histidyl-[protein](out) + sucrose = sucrose 6(G)-phosphate(in) + L-histidyl-[protein]. Its function is as follows. The phosphoenolpyruvate-dependent sugar phosphotransferase system (sugar PTS), a major carbohydrate active transport system, catalyzes the phosphorylation of incoming sugar substrates concomitantly with their translocation across the cell membrane. This system is involved in sucrose transport. The chain is PTS system sucrose-specific EIIBC component (scrA) from Pasteurella multocida (strain Pm70).